The following is a 634-amino-acid chain: DNA-directed RNA polymerase subunit gamma (634 aa).

Positions 74, 76, 89, and 92 each coordinate Zn(2+). 3 residues coordinate Mg(2+): aspartate 471, aspartate 473, and aspartate 475.

This sequence belongs to the RNA polymerase beta' chain family. RpoC1 subfamily. In terms of assembly, in cyanobacteria the RNAP catalytic core is composed of 2 alpha, 1 beta, 1 beta', 1 gamma and 1 omega subunit. When a sigma factor is associated with the core the holoenzyme is formed, which can initiate transcription. Mg(2+) is required as a cofactor. Zn(2+) serves as cofactor.

It carries out the reaction RNA(n) + a ribonucleoside 5'-triphosphate = RNA(n+1) + diphosphate. In terms of biological role, DNA-dependent RNA polymerase catalyzes the transcription of DNA into RNA using the four ribonucleoside triphosphates as substrates. The protein is DNA-directed RNA polymerase subunit gamma of Prochlorococcus marinus (strain MIT 9303).